The primary structure comprises 219 residues: UPF0126 membrane protein SCO5481 (219 aa).

The next 6 membrane-spanning stretches (helical) occupy residues 10–30 (VQHT…ALLA), 34–54 (NFDV…GGLF), 66–86 (AFTD…VFFL), 93–113 (LQTG…VAGT), 120–140 (GLGL…GGVL), and 158–178 (LYAV…RYEA).

The protein belongs to the UPF0126 family.

Its subcellular location is the cell membrane. The polypeptide is UPF0126 membrane protein SCO5481 (Streptomyces coelicolor (strain ATCC BAA-471 / A3(2) / M145)).